Consider the following 1400-residue polypeptide: DNA-directed RNA polymerase subunit beta' (1400 aa).

Zn(2+)-binding residues include cysteine 71, cysteine 73, cysteine 86, and cysteine 89. Mg(2+) is bound by residues aspartate 462, aspartate 464, and aspartate 466. Residues cysteine 811, cysteine 885, cysteine 892, and cysteine 895 each coordinate Zn(2+).

Belongs to the RNA polymerase beta' chain family. The RNAP catalytic core consists of 2 alpha, 1 beta, 1 beta' and 1 omega subunit. When a sigma factor is associated with the core the holoenzyme is formed, which can initiate transcription. The cofactor is Mg(2+). Zn(2+) serves as cofactor.

The enzyme catalyses RNA(n) + a ribonucleoside 5'-triphosphate = RNA(n+1) + diphosphate. DNA-dependent RNA polymerase catalyzes the transcription of DNA into RNA using the four ribonucleoside triphosphates as substrates. The polypeptide is DNA-directed RNA polymerase subunit beta' (Brucella abortus (strain S19)).